A 442-amino-acid polypeptide reads, in one-letter code: Ribosomal protein uS12 methylthiotransferase RimO (442 aa).

Residues 5–117 (PSIGVVSLGC…VLDAIHAALP (113 aa)) enclose the MTTase N-terminal domain. Cysteine 14, cysteine 50, cysteine 79, cysteine 148, cysteine 152, and cysteine 155 together coordinate [4Fe-4S] cluster. Residues 134-371 (LTPPHYAYLK…MAVQEAISRQ (238 aa)) enclose the Radical SAM core domain. Positions 374 to 441 (QRRVGQRQRV…AHDLYGMVVS (68 aa)) constitute a TRAM domain.

It belongs to the methylthiotransferase family. RimO subfamily. [4Fe-4S] cluster is required as a cofactor.

The protein resides in the cytoplasm. It catalyses the reaction L-aspartate(89)-[ribosomal protein uS12]-hydrogen + (sulfur carrier)-SH + AH2 + 2 S-adenosyl-L-methionine = 3-methylsulfanyl-L-aspartate(89)-[ribosomal protein uS12]-hydrogen + (sulfur carrier)-H + 5'-deoxyadenosine + L-methionine + A + S-adenosyl-L-homocysteine + 2 H(+). Functionally, catalyzes the methylthiolation of an aspartic acid residue of ribosomal protein uS12. The chain is Ribosomal protein uS12 methylthiotransferase RimO from Acidithiobacillus ferrooxidans (strain ATCC 53993 / BNL-5-31) (Leptospirillum ferrooxidans (ATCC 53993)).